Consider the following 353-residue polypeptide: Nicotinate-nucleotide--dimethylbenzimidazole phosphoribosyltransferase (353 aa).

Glutamate 319 functions as the Proton acceptor in the catalytic mechanism.

Belongs to the CobT family.

The catalysed reaction is 5,6-dimethylbenzimidazole + nicotinate beta-D-ribonucleotide = alpha-ribazole 5'-phosphate + nicotinate + H(+). It participates in nucleoside biosynthesis; alpha-ribazole biosynthesis; alpha-ribazole from 5,6-dimethylbenzimidazole: step 1/2. Its function is as follows. Catalyzes the synthesis of alpha-ribazole-5'-phosphate from nicotinate mononucleotide (NAMN) and 5,6-dimethylbenzimidazole (DMB). The protein is Nicotinate-nucleotide--dimethylbenzimidazole phosphoribosyltransferase of Chlorobaculum parvum (strain DSM 263 / NCIMB 8327) (Chlorobium vibrioforme subsp. thiosulfatophilum).